Consider the following 164-residue polypeptide: UPF0304 protein YfbU (164 aa).

The protein belongs to the UPF0304 family.

The sequence is that of UPF0304 protein YfbU from Shigella flexneri serotype 5b (strain 8401).